Reading from the N-terminus, the 717-residue chain is Photosystem I P700 chlorophyll a apoprotein A1 (717 aa).

Helical transmembrane passes span 59–82 (VFRA…FHGA), 145–168 (LYCT…FHYH), 184–208 (LNHH…HVSL), 280–298 (TAHH…GHMY), 335–358 (WHAQ…HHMY), 374–400 (LSLF…IFMV), 422–444 (AIVS…LYIH), and 520–538 (FLVH…LILL). Residues Cys-562 and Cys-571 each coordinate [4Fe-4S] cluster. Transmembrane regions (helical) follow at residues 578–599 (HVFL…HFSW) and 653–675 (LSAY…MFLF). Chlorophyll a' is bound at residue His-664. Chlorophyll a-binding residues include Met-672 and Tyr-680. Position 681 (Trp-681) interacts with phylloquinone. The helical transmembrane segment at 713 to 717 (AVGVA) threads the bilayer.

This sequence belongs to the PsaA/PsaB family. As to quaternary structure, the PsaA/B heterodimer binds the P700 chlorophyll special pair and subsequent electron acceptors. PSI consists of a core antenna complex that captures photons, and an electron transfer chain that converts photonic excitation into a charge separation. The eukaryotic PSI reaction center is composed of at least 11 subunits. The cofactor is P700 is a chlorophyll a/chlorophyll a' dimer, A0 is one or more chlorophyll a, A1 is one or both phylloquinones and FX is a shared 4Fe-4S iron-sulfur center..

It is found in the plastid. Its subcellular location is the chloroplast thylakoid membrane. The enzyme catalyses reduced [plastocyanin] + hnu + oxidized [2Fe-2S]-[ferredoxin] = oxidized [plastocyanin] + reduced [2Fe-2S]-[ferredoxin]. Functionally, psaA and PsaB bind P700, the primary electron donor of photosystem I (PSI), as well as the electron acceptors A0, A1 and FX. PSI is a plastocyanin-ferredoxin oxidoreductase, converting photonic excitation into a charge separation, which transfers an electron from the donor P700 chlorophyll pair to the spectroscopically characterized acceptors A0, A1, FX, FA and FB in turn. Oxidized P700 is reduced on the lumenal side of the thylakoid membrane by plastocyanin. This Cycas revoluta (Sago palm) protein is Photosystem I P700 chlorophyll a apoprotein A1.